A 369-amino-acid polypeptide reads, in one-letter code: Trichocyst matrix protein T1-B (369 aa).

An N-terminal signal peptide occupies residues 1-16 (MYKLAVCTLLILSVTA). The propeptide occupies 17–55 (IDVTNSVWTSHDQKAFAQIKQSGWGNFILNFGELHLQTG). Positions 56 to 180 (GILAELNTEI…AIDESLQLLS (125 aa)) form a coiled coil. Residues 190 to 225 (IQKVQKNLTKIQQSLKRHSTFQTFIKTLLEIAVEAN) constitute a propeptide that is removed on maturation. Residues 262-354 (KDFEARVIQL…AHQALDLLNQ (93 aa)) are a coiled coil.

This sequence belongs to the TMP family. Two components are produced by post-translational processing from the precursor peptide.

The protein localises to the trichocyst. In terms of biological role, structural protein that crystallize inside the trichocyst matrix. The polypeptide is Trichocyst matrix protein T1-B (T1B) (Paramecium tetraurelia).